An 883-amino-acid polypeptide reads, in one-letter code: Receptor-like protein 40 (883 aa).

A signal peptide spans 1 to 21; that stretch reads MSELLFSLNFLLLLLLSCVSP. The Extracellular segment spans residues 22-846; the sequence is SSFFTFNNPV…EDEQVLNWKA (825 aa). Residues Asn58, Asn91, and Asn109 are each glycosylated (N-linked (GlcNAc...) asparagine). 2 LRR repeats span residues 97-121 and 122-143; these read FHHL…KFGM and LNNL…PFSF. The N-linked (GlcNAc...) asparagine glycan is linked to Asn145. 14 LRR repeats span residues 146–169, 170–195, 197–219, 220–244, 246–267, 268–291, 293–316, 317–340, 342–364, 365–390, 391–412, 413–437, 439–462, and 463–486; these read LSML…ARNL, RKLR…LFEL, HIIY…EFGN, LNKL…ISNL, QLTE…VQNL, TKLS…LFTM, FLSY…SSSS, SRLE…ISKL, NLKE…LFSS, LKSL…SYIP, STLE…VFKT, LHNL…LWSL, RLSS…VLVN, and SSVQ…PLSI. Asn189, Asn207, Asn243, and Asn266 each carry an N-linked (GlcNAc...) asparagine glycan. 2 N-linked (GlcNAc...) asparagine glycosylation sites follow: Asn305 and Asn312. An N-linked (GlcNAc...) asparagine glycan is attached at Asn352. Asn462 carries N-linked (GlcNAc...) asparagine glycosylation. The stretch at 487–506 is one LRR 17; degenerate repeat; that stretch reads NYFSAIDNRFGGDIPLSICN. Residues Asn506 and Asn519 are each glycosylated (N-linked (GlcNAc...) asparagine). LRR repeat units lie at residues 507-528, 529-552, 554-576, 578-600, 601-624, 627-651, 701-724, 725-747, 748-772, and 774-797; these read RSSL…PPCL, SNLL…YYED, PLRS…LINC, ALQF…LKAL, PKLQ…NEGP, FPEL…FFVN, TSSA…IGLL, KALI…SFAN, LKKM…LRTL, and FLAY…QITG. An N-linked (GlcNAc...) asparagine glycan is attached at Asn575. A glycan (N-linked (GlcNAc...) asparagine) is linked at Asn731. A glycan (N-linked (GlcNAc...) asparagine) is linked at Asn779. The chain crosses the membrane as a helical span at residues 847–867; that stretch reads VAIGYGIGVLLGLAIAQLISL. The Cytoplasmic portion of the chain corresponds to 868–883; that stretch reads YKPKWLASLVIKSRNC.

Belongs to the RLP family.

The protein resides in the cell membrane. This chain is Receptor-like protein 40, found in Arabidopsis thaliana (Mouse-ear cress).